The primary structure comprises 331 residues: Mitochondrial respiration co-chaperone MRJ1 (331 aa).

The transit peptide at M1–D36 directs the protein to the mitochondrion. Residues S35–L66 form a disordered region. The span at D40 to Q53 shows a compositional bias: low complexity. Positions D83–G147 constitute a J domain. Residues D203 to A226 form a disordered region. Positions R275–E303 constitute an IQ domain.

This sequence belongs to the DnaJ family. Interacts with QCR2.

The protein resides in the mitochondrion. Mitochondrial co-chaperone required for ubiquinol-cytochrome c oxidoreductase (mitochondrial respiratory chain complex III) activity. The chain is Mitochondrial respiration co-chaperone MRJ1 from Cryptococcus neoformans var. grubii serotype A (strain H99 / ATCC 208821 / CBS 10515 / FGSC 9487) (Filobasidiella neoformans var. grubii).